Here is a 1261-residue protein sequence, read N- to C-terminus: ABC-type transmembrane transporter verA (1261 aa).

Residues 41–61 form a helical membrane-spanning segment; that stretch reads IGCAFAAVCSGAAMPLMALIL. Positions 41–334 constitute an ABC transmembrane type-1 1 domain; that stretch reads IGCAFAAVCS…LGPNMPSFIK (294 aa). Asparagine 67 carries N-linked (GlcNAc...) asparagine glycosylation. Transmembrane regions (helical) follow at residues 92–112, 166–186, 190–210, 270–290, and 308–328; these read LWFV…SFGF, LGIM…AFSQ, LTLV…FIVS, FVGL…AIGF, and ILSV…LGPN. An ABC transporter 1 domain is found at 374 to 618; it reads VELRDMSFAY…GGLYKRLYDA (245 aa). N-linked (GlcNAc...) asparagine glycosylation occurs at asparagine 396. Residue 409-416 coordinates ATP; it reads GPSGAGKS. N-linked (GlcNAc...) asparagine glycosylation is present at asparagine 463. Transmembrane regions (helical) follow at residues 686 to 706, 734 to 754, 808 to 828, 830 to 850, 913 to 933, and 950 to 970; these read YWPI…IFPV, LMFF…GFFM, MGLL…GLAY, WKFA…AGYL, VMTL…ALGF, and FFTV…LFGF. The ABC transmembrane type-1 2 domain maps to 691 to 976; it reads LIGLVACVVT…LFGFSSNLGK (286 aa). N-linked (GlcNAc...) asparagine glycosylation is found at asparagine 1007 and asparagine 1021. The region spanning 1017–1255 is the ABC transporter 2 domain; it reads VDMQNVTFAY…QGNYFKMHES (239 aa). 1052 to 1059 contributes to the ATP binding site; that stretch reads GTSGSGKS. Residue asparagine 1106 is glycosylated (N-linked (GlcNAc...) asparagine).

It belongs to the ABC transporter superfamily. ABCB family. Multidrug resistance exporter (TC 3.A.1.201) subfamily.

Its subcellular location is the cell membrane. In terms of biological role, ABC-type transmembrane transporter; part of the gene cluster that mediates the biosynthesis of 11'-deoxyverticillin A, one of the dimeric epipolythiodioxopiperazines (ETPs) from the verticillin family that are toxic secondary metabolites. The verA multidrug transporter is probably involved in the secretion of 11'-deoxyverticillin A. In Clonostachys rogersoniana, this protein is ABC-type transmembrane transporter verA.